The following is a 532-amino-acid chain: MEEQVFKGDPDTPHSISFSGSGFLSFYQAGAVDALRDLAPRMLETAHRFAGTSAGAVIAALAICGIEMDEYLRVLNVGVAEVKKSFLGPLSPSCKMVQMMRQFLYRVLPEDSYKVTTGKLHVSLTRLTDGENVVVSEFTSKEELIEALYCSCFVPVYCGLIPPTYRGVRYIDGGFTGMQPCAFWTDAITISTFSGQQDICPRDCPAIFHDFRMFNCSFQFSLENIARMTHALFPPDLVILHDYYYRGYEDAVLYLRRLNAVYLNSSSKRVIFPRVEVYCQIELALGNECPERSQPSLRARQASLEGATQPHKEWVPKGDGRGSHGPPVSQPVQTLEFTCESPVSAPVSPLEQPPAQPLASSTPLSLSGMPPVSFPAVHKPPSSTPGSSLPTPPPGLSPLSPQQQVQPSGSPARSLHSQAPTSPRPSLGPSTVGAPQTLPRSSLSAFPAQPPVEELGQEQPQAVALLVSSKPKSAVPLVHVKETVSKPYVTESPAEDSNWVNKVFKKNKQKTSGTRKGFPRHSGSKKPSSKVQ.

Residues 16–185 enclose the PNPLA domain; that stretch reads ISFSGSGFLS…TGMQPCAFWT (170 aa). The GXSXG signature appears at 51–55; that stretch reads GTSAG. Ser-53 acts as the Nucleophile in catalysis. Asp-172 (proton acceptor) is an active-site residue. The DGA/G motif lies at 172–174; it reads DGG. Disordered regions lie at residues 290–457 and 489–532; these read PERS…ELGQ and VTES…SKVQ. Residues 310–322 are compositionally biased toward basic and acidic residues; sequence PHKEWVPKGDGRG. Composition is skewed to low complexity over residues 380–389 and 397–411; these read PPSSTPGSSL and SPLSPQQQVQPSGSP. The segment covering 517–532 has biased composition (basic residues); sequence GFPRHSGSKKPSSKVQ.

As to expression, expressed in the digestive system. Expressed in the epidermis of skin keratinocytes. Strongly expressed in the granular layer. Expressed in the upper epidermis and eccrine sweat glands of the dermis and in the region of keratin filament bundles, which is more pronounced in upper epidermal layers and in the lower cornified layers.

It is found in the cytoplasm. The enzyme catalyses an N-(omega-hydroxy-ultra-long chain fatty acyl)-sphingoid base + a (9Z,12Z)-octadecadienoyl-containing triacyl-sn-glycerol = an N-[omega-(9Z,12Z-octadecadienoyloxy)-O-ultra-long chain fatty acyl]-sphingoid base + a diacylglycerol. It carries out the reaction an N-(omega-hydroxy-ultra-long chain fatty acyl)-sphing-4-enine + a (9Z,12Z)-octadecadienoyl-containing triacyl-sn-glycerol = an N-(omega-(9Z,12Z-octadecadienoyloxy)-ultra-long chain fatty acyl)-sphing-4-enine + a diacylglycerol. The catalysed reaction is N-(30-hydroxytriacontanoyl)-sphing-4-enine + 1,2,3-tri-(9Z,12Z)-octadecadienoylglycerol = N-[30-(9Z,12Z-octadecadienoyloxy)-triacontanoyl]-sphing-4-enine + di-(9Z,12Z)-octadecadienoylglycerol. It catalyses the reaction N-(28-hydroxyoctacosanoyl)-sphing-4-enine + a (9Z,12Z)-octadecadienoyl-containing triacyl-sn-glycerol = N-(28-(9Z,12Z-octadecadienoyloxy)-octacosanoyl)-sphing-4-enine + a diacylglycerol. The enzyme catalyses N-(32-hydroxydotriacontanoyl)-sphing-4-enine + a (9Z,12Z)-octadecadienoyl-containing triacyl-sn-glycerol = N-(32-(9Z,12Z-octadecadienoyloxy)-dotricontanoyl)-sphing-4-enine + a diacylglycerol. It carries out the reaction N-(32-hydroxydotriacontenoyl)-sphing-4-enine + a (9Z,12Z)-octadecadienoyl-containing triacyl-sn-glycerol = an N-(32-(9Z,12Z-octadecadienoyloxy)-dotriacontenoyl)-sphing-4-enine + a diacylglycerol. The catalysed reaction is an N-(34-hydroxytetratriacontenoyl)-sphing-4-enine + a (9Z,12Z)-octadecadienoyl-containing triacyl-sn-glycerol = an N-(34-(9Z,12Z-octadecadienoyloxy)-tetratriacontenoyl)-sphing-4-enine + a diacylglycerol. It catalyses the reaction an N-(34-hydroxytetratriacontadienoyl)-sphing-4-enine + a (9Z,12Z)-octadecadienoyl-containing triacyl-sn-glycerol = an N-(34-(9Z,12Z-octadecadienoyloxy)-tetratriacontadienoyl)-sphing-4-enine + a diacylglycerol. The enzyme catalyses an N-(36-hydroxyhexatriacontenoyl)-sphing-4-enine + a (9Z,12Z)-octadecadienoyl-containing triacyl-sn-glycerol = an N-(36-(9Z,12Z-octadecadienoyloxy)-hexatriacontenoyl)-sphing-4-enine + a diacylglycerol. It carries out the reaction an N-(36-hydroxyhexatriacontadienoyl)-sphing-4-enine + a (9Z,12Z)-octadecadienoyl-containing triacyl-sn-glycerol = an N-(36-(9Z,12Z-octadecadienoyloxy)-hexatriacontadienoyl)-sphing-4-enine + a diacylglycerol. The catalysed reaction is an N-(38-hydroxyoctatriacontenoyl)-sphing-4-enine + a (9Z,12Z)-octadecadienoyl-containing triacyl-sn-glycerol = an N-(38-(9Z,12Z-octadecadienoyloxy)-octatriacontenoyl)-sphing-4-enine + a diacylglycerol. Its function is as follows. Omega-hydroxyceramide transacylase involved in the synthesis of omega-O-acylceramides (esterified omega-hydroxyacyl-sphingosine; EOS), which are extremely hydrophobic lipids involved in skin barrier formation. Catalyzes the last step of the synthesis of omega-O-acylceramides by transferring linoleic acid from triglycerides to an omega-hydroxyceramide. Omega-O-acylceramides, are required for the biogenesis of lipid lamellae in the stratum corneum and the formation of the cornified lipid envelope which are essential for the epidermis barrier function. These lipids also play a role in keratinocyte differentiation. May also act on omega-hydroxylated ultra-long chain fatty acids (omega-OH ULCFA) and acylglucosylceramides (GlcEOS). This chain is Omega-hydroxyceramide transacylase, found in Homo sapiens (Human).